The chain runs to 204 residues: UPF0637 protein SAR1080 (204 aa).

This sequence belongs to the UPF0637 family.

This Staphylococcus aureus (strain MRSA252) protein is UPF0637 protein SAR1080.